The following is a 96-amino-acid chain: Co-chaperonin GroES (96 aa).

Belongs to the GroES chaperonin family. Heptamer of 7 subunits arranged in a ring. Interacts with the chaperonin GroEL.

Its subcellular location is the cytoplasm. In terms of biological role, together with the chaperonin GroEL, plays an essential role in assisting protein folding. The GroEL-GroES system forms a nano-cage that allows encapsulation of the non-native substrate proteins and provides a physical environment optimized to promote and accelerate protein folding. GroES binds to the apical surface of the GroEL ring, thereby capping the opening of the GroEL channel. The sequence is that of Co-chaperonin GroES from Methylibium petroleiphilum (strain ATCC BAA-1232 / LMG 22953 / PM1).